The chain runs to 146 residues: Large ribosomal subunit protein uL15 (146 aa).

Basic and acidic residues predominate over residues 1–10; sequence MTLKLHDLRP. The interval 1-41 is disordered; it reads MTLKLHDLRPARGSKTARTRVGRGDGSKGKTAGRGTKGTRA.

The protein belongs to the universal ribosomal protein uL15 family. Part of the 50S ribosomal subunit.

Its function is as follows. Binds to the 23S rRNA. The chain is Large ribosomal subunit protein uL15 from Mycobacterium bovis (strain BCG / Pasteur 1173P2).